Reading from the N-terminus, the 76-residue chain is Small, acid-soluble spore protein Tlp (76 aa).

Composition is skewed to basic and acidic residues over residues 1-15, 26-38, and 46-76; these read MAKRDDRSNNPERIE, DEARDYAKAHSEE, and EIEQKNERREQSIDGLREELKDEVNDQKNNS. The segment at 1–76 is disordered; it reads MAKRDDRSNN…DEVNDQKNNS (76 aa).

It belongs to the Tlp family.

It localises to the spore core. This chain is Small, acid-soluble spore protein Tlp, found in Shouchella clausii (strain KSM-K16) (Alkalihalobacillus clausii).